A 325-amino-acid polypeptide reads, in one-letter code: Gibberellin 20-oxidase-like protein (325 aa).

The 115-residue stretch at 152-266 folds into the Fe2OG dioxygenase domain; that stretch reads CHGYFRINNY…RFSLAFFWCF (115 aa). Fe cation is bound by residues His186, Asp188, and His244. Arg257 is a binding site for 2-oxoglutarate.

This sequence belongs to the iron/ascorbate-dependent oxidoreductase family. GA20OX subfamily. Fe(2+) serves as cofactor. In terms of tissue distribution, highly expressed in elongation zone of lateral roots.

Negative regulator of root hair growth. This chain is Gibberellin 20-oxidase-like protein, found in Arabidopsis thaliana (Mouse-ear cress).